Reading from the N-terminus, the 111-residue chain is uncharacterized protein (111 aa).

2 consecutive transmembrane segments (helical) span residues 18–38 (LNVF…LFVS) and 42–62 (LALA…RTFP).

Its subcellular location is the membrane. This is an uncharacterized protein from Saccharomyces cerevisiae (strain ATCC 204508 / S288c) (Baker's yeast).